The chain runs to 401 residues: tRNA(Met) cytidine acetate ligase (401 aa).

ATP contacts are provided by residues 7 to 20 (IVEY…HLYH), glycine 102, asparagine 164, and arginine 189.

Belongs to the TmcAL family.

The protein localises to the cytoplasm. The enzyme catalyses cytidine(34) in elongator tRNA(Met) + acetate + ATP = N(4)-acetylcytidine(34) in elongator tRNA(Met) + AMP + diphosphate. Its function is as follows. Catalyzes the formation of N(4)-acetylcytidine (ac(4)C) at the wobble position of elongator tRNA(Met), using acetate and ATP as substrates. First activates an acetate ion to form acetyladenylate (Ac-AMP) and then transfers the acetyl group to tRNA to form ac(4)C34. The protein is tRNA(Met) cytidine acetate ligase of Caldanaerobacter subterraneus subsp. tengcongensis (strain DSM 15242 / JCM 11007 / NBRC 100824 / MB4) (Thermoanaerobacter tengcongensis).